Reading from the N-terminus, the 752-residue chain is Kaurene synthase like 2, chloroplastic (752 aa).

The N-terminal 28 residues, 1–28 (MSLLLSNSALVGPKFRSSRISHASASLD), are a transit peptide targeting the chloroplast. Residues D538, D542, N682, and E690 each contribute to the Mg(2+) site. The short motif at 538 to 542 (DDLFD) is the DDXXD motif element.

Belongs to the terpene synthase family. Requires Mg(2+) as cofactor. Highly expressed in leaves.

It localises to the plastid. Its subcellular location is the chloroplast. It functions in the pathway secondary metabolite biosynthesis; terpenoid biosynthesis. Functionally, involved in the biosynthesis of ent-kaurene diterpenoids natural products such as oridonin, miltiradiene, eriocalyxin B and nezukol, known to exhibit antitumor, anti-inflammatory and antibacterial activities. Catalyzes the conversion of ent-copalyl diphosphate (ent-CPP) to ent-isopimaradiene like compounds. The protein is Kaurene synthase like 2, chloroplastic of Isodon rubescens (Rabdosia rubescens).